Reading from the N-terminus, the 569-residue chain is Sulfite reductase [NADPH] hemoprotein beta-component (569 aa).

Cys-434, Cys-440, Cys-479, and Cys-483 together coordinate [4Fe-4S] cluster. Cys-483 is a binding site for siroheme.

This sequence belongs to the nitrite and sulfite reductase 4Fe-4S domain family. In terms of assembly, alpha(8)-beta(8). The alpha component is a flavoprotein, the beta component is a hemoprotein. Requires siroheme as cofactor. It depends on [4Fe-4S] cluster as a cofactor.

The catalysed reaction is hydrogen sulfide + 3 NADP(+) + 3 H2O = sulfite + 3 NADPH + 4 H(+). Its pathway is sulfur metabolism; hydrogen sulfide biosynthesis; hydrogen sulfide from sulfite (NADPH route): step 1/1. Its function is as follows. Component of the sulfite reductase complex that catalyzes the 6-electron reduction of sulfite to sulfide. This is one of several activities required for the biosynthesis of L-cysteine from sulfate. The sequence is that of Sulfite reductase [NADPH] hemoprotein beta-component from Staphylococcus carnosus (strain TM300).